The following is a 418-amino-acid chain: Nuclear hormone receptor family member nhr-209 (418 aa).

Positions 43–121 form a DNA-binding region, nuclear receptor; sequence PEKCAVCKNA…VGMDSTAIRA (79 aa). 2 NR C4-type zinc fingers span residues 46-66 and 82-104; these read CAVCKNAAIGYHYNVPSCNGC and CMNHKNCLDEIESDESQRLCKGC. Residues 174–414 form the NR LBD domain; that stretch reads TIPDGFEDMR…SHPPKSLFDE (241 aa). Positions 403–414 are AF-2; it reads ECSHPPKSLFDE.

This sequence belongs to the nuclear hormone receptor family.

The protein localises to the nucleus. Its function is as follows. Transcriptional regulator. Plays a role in modulation of lifespan and immunity. The protein is Nuclear hormone receptor family member nhr-209 of Caenorhabditis elegans.